We begin with the raw amino-acid sequence, 79 residues long: RNA-binding protein Hfq (79 aa).

The 61-residue stretch at 10–70 (DVFLNTVRKQ…ISTIMPGQPV (61 aa)) folds into the Sm domain.

This sequence belongs to the Hfq family. Homohexamer.

In terms of biological role, RNA chaperone that binds small regulatory RNA (sRNAs) and mRNAs to facilitate mRNA translational regulation in response to envelope stress, environmental stress and changes in metabolite concentrations. Also binds with high specificity to tRNAs. This chain is RNA-binding protein Hfq, found in Bartonella tribocorum (strain CIP 105476 / IBS 506).